The primary structure comprises 1140 residues: Protein shank (1140 aa).

ANK repeat units lie at residues 144–174 (QGETPLTLAAGIPNNRAVIVSLIGGGAHVDF), 178–207 (EGQTAMHKAAFLSSFENVKTLIELGASPNY), 211–242 (IGLTPLYYNMLTADSNDQVAEILLREAADIGV), 246–275 (HGNHEIHQACKNGLTKHVEHLLYFGGQIDA), 279–309 (NGNSPLHVCAVNNRPECARVLLFRGADHLAV), and 312–341 (QGQTALHVSHIVGNPGVADVVQAHNPKSSV). Residues 337–412 (PKSSVPYRGT…ITPSEYGTMR (76 aa)) are disordered. The segment covering 351–364 (TRRRLSSTITRRRS) has biased composition (basic residues). Low complexity predominate over residues 388 to 412 (SAAPSPSPSRSSRTTITPSEYGTMR). The 94-residue stretch at 436 to 529 (ILVIPRGVKG…TITLKVITVD (94 aa)) folds into the PDZ domain. Polar residues-rich tracts occupy residues 640-657 (DQESLNGGYSSKKYNSVS) and 687-704 (TSTFEYNCSSRSTPQLSR). Disordered stretches follow at residues 640-673 (DQESLNGGYSSKKYNSVSDMKRRKGQRNVVASSA), 687-856 (TSTF…AASA), 875-902 (QLKKAEPRETSAASVSNNNNNNNNSTTD), 961-993 (KDSGYTSSRTSLEPSESEEKDHRPHFSLDHSPN), and 1008-1028 (YGQKDNMSVASSSTASSSSTV). Low complexity-rich tracts occupy residues 761 to 775 (QHQNHQNHQYQQQHP) and 784 to 793 (PQPIQQQQSS). Composition is skewed to pro residues over residues 794-806 (IPPPPPPPPPPHC) and 823-847 (VPPPPPPLPPISSGAPPPPPPPPPG). The segment covering 964–974 (GYTSSRTSLEP) has biased composition (polar residues). The segment covering 977–988 (SEEKDHRPHFSL) has biased composition (basic and acidic residues). Positions 1015 to 1028 (SVASSSTASSSSTV) are enriched in low complexity. The SAM domain occupies 1078 to 1140 (WSVDDVIGWL…IESALRGLLQ (63 aa)).

This sequence belongs to the SHANK family. In terms of assembly, interacts (via PDZ domain) with egl-19 (via C-terminus). As to expression, expressed in the pharynx, pharyngeal-intestinal valve, intestine, rectal epithelial cells, tail neurons, nerve cord and sperm.

The protein resides in the cell projection. The protein localises to the pseudopodium. Its subcellular location is the cytoplasmic vesicle. It localises to the postsynaptic density. Scaffold protein that most likely acts in the postsynaptic density (PSD) of excitatory synapses which orchestrates synapse formation and maintenance at neuromuscular junctions. Associates with and trafficks the L-type calcium channel egl-19 to the cell surface of body wall muscles to ensure the function of the calcium channel and therefore maintain the Ca(2+) current density. The maintenance of Ca(2+) also allows for the downstream regulation of Ca(2+)-induced expression of genes such as gem-4. Plays a role in the regulation of the defecation cycle, and this may be in association with the inositol trisphosphate (IP3) receptor itr-1, which in turn mediates periodic calcium release and muscle contractions. Required for normal fertility and pharyngeal pumping. In Caenorhabditis elegans, this protein is Protein shank.